Reading from the N-terminus, the 126-residue chain is C-type natriuretic peptide (126 aa).

The N-terminal stretch at 1 to 23 (MHLSQLIACALLLALLSLRPSEA) is a signal peptide. Positions 19-71 (RPSEAKPGTPPKVPRTPPGEELAEPQAAGGNQKKGDKTPGGGGANLKGDRSRL) are disordered. Residues 24–73 (KPGTPPKVPRTPPGEELAEPQAAGGNQKKGDKTPGGGGANLKGDRSRLLR) constitute a propeptide that is removed on maturation. Positions 26–35 (GTPPKVPRTP) are enriched in pro residues. Cys-110 and Cys-126 are disulfide-bonded.

The protein belongs to the natriuretic peptide family. Post-translationally, degraded by IDE (in vitro). Expressed exclusively in brain.

Its subcellular location is the secreted. Its function is as follows. Hormone which plays a role in endochondral ossification through regulation of cartilaginous growth plate chondrocytes proliferation and differentiation. May also be vasoactive and natriuretic. Acts by specifically binding and stimulating NPR2 to produce cGMP. Binds the clearance receptor NPR3. This is C-type natriuretic peptide (Nppc) from Rattus norvegicus (Rat).